The chain runs to 633 residues: ATP-dependent RNA helicase mrh4, mitochondrial (633 aa).

Residues 1–38 (MNRLGRLSLPLRPQVCLLCQTQATMSSPLAGWQAVRSM) constitute a mitochondrion transit peptide. The disordered stretch occupies residues 50–115 (MVLSSNVDKS…KQKPDSPLYK (66 aa)). Residues 52–63 (LSSNVDKSSLKQ) are compositionally biased toward polar residues. Residues 98 to 109 (RSGDSEDDKQKP) are compositionally biased toward basic and acidic residues. A Q motif motif is present at residues 142-175 (SSFDQFPLLPVVRHSISSQALSRTGDIVPTPIQR). Residues 195 to 407 (SDHEPNFEQY…RKRYPDIRRL (213 aa)) enclose the Helicase ATP-binding domain. Position 208 to 215 (208 to 215 (AETGSGKT)) interacts with ATP. The DEAD box motif lies at 354 to 357 (DEAD). In terms of domain architecture, Helicase C-terminal spans 458–633 (FLAQAGPKVK…EGMFRGQALI (176 aa)).

Belongs to the DEAD box helicase family. MRH4 subfamily.

It is found in the mitochondrion. It carries out the reaction ATP + H2O = ADP + phosphate + H(+). In terms of biological role, ATP-binding RNA helicase involved in mitochondrial RNA metabolism. Required for maintenance of mitochondrial DNA. This is ATP-dependent RNA helicase mrh4, mitochondrial (mrh4) from Aspergillus niger (strain ATCC MYA-4892 / CBS 513.88 / FGSC A1513).